A 209-amino-acid polypeptide reads, in one-letter code: Geminin (209 aa).

A disordered region spans residues 1-79 (MNPSMKQKQE…PESSENKNLG (79 aa)). Basic and acidic residues predominate over residues 7-16 (QKQEEIKENI). Lys-27 carries the N6-acetyllysine modification. A phosphoserine mark is found at Ser-34, Ser-36, Ser-49, Ser-63, and Ser-64. The segment at 82–161 (TQESFDLMIK…AELIERLNGE (80 aa)) is necessary and sufficient for interaction with IDAS and CDT1. A coiled-coil region spans residues 94–144 (PSSQYWKEVAEKRRKALYEALKENEKLHKEIEQKDNEIARLKKENKELAEV). The disordered stretch occupies residues 164-209 (DNFESLDNQEFDSEEETVEDSLVEDSEIGTCAEGTVSSSTDAKPCI). The tract at residues 170–190 (DNQEFDSEEETVEDSLVEDSE) is homeodomain binding. The segment covering 170–190 (DNQEFDSEEETVEDSLVEDSE) has biased composition (acidic residues). A Phosphoserine; by CK2 modification is found at Ser-184. Positions 198–209 (TVSSSTDAKPCI) are enriched in polar residues.

It belongs to the geminin family. Homotetramer. Interacts with CDT1; this inhibits binding of the MCM complex to origins of replication. The complex with CDT1 exists in two forms, a 'permissive' heterotrimer and an 'inhibitory' heterohexamer. Interacts (via coiled-coil domain) with IDAS (via coiled-coil domain); this targets GMNN to the nucleus. The heterodimer formed by GMNN and MCIDAS has much lower affinity for CDT1 than the GMNN homodimer. Interacts with a subset of Hox proteins, affinity increasing from anterior to posterior types, the strongest interaction being with HOXB1, HOXC9 and HOXD10. Interacts with LRWD1 from G1/S to mitosis. Phosphorylated during mitosis. Phosphorylation at Ser-184 by CK2 results in enhanced binding to Hox proteins and more potent inhibitory effect on Hox transcriptional activity.

Its subcellular location is the cytoplasm. The protein localises to the nucleus. In terms of biological role, inhibits DNA replication by preventing the incorporation of MCM complex into pre-replication complex (pre-RC). It is degraded during the mitotic phase of the cell cycle. Its destruction at the metaphase-anaphase transition permits replication in the succeeding cell cycle. Inhibits histone acetyltransferase activity of KAT7/HBO1 in a CDT1-dependent manner, inhibiting histone H4 acetylation and DNA replication licensing. Inhibits the transcriptional activity of a subset of Hox proteins, enrolling them in cell proliferative control. The chain is Geminin (GMNN) from Homo sapiens (Human).